A 301-amino-acid chain; its full sequence is MAYRDRTGLYITFRQSYSHHGQRLELSGWDPKEERQSLVHKDNKDNTVIEMDMLAPRWVTVEGEIDSLLLNTRRNINLLDKQYAKHVLPSFSDKTEQENEIQRLTIQITQDFQRCQKLLQVTKAQTNSATGSEALMAKNFLSNLASRIQTESAQFRKKQSTYLKKLRGLNANISPVESKLDETVSDVAISQSTIQQVALMEEQGEDEQAIRHERAVAKIAEGIIELAQMFQDLQVLVIEQGALVDRIDFNIEQTQVHAKSAEKELIKAESHQKNTGRLRFICFLILLIVALIVILAIKLLR.

The Cytoplasmic portion of the chain corresponds to 1 to 279 (MAYRDRTGLY…SHQKNTGRLR (279 aa)). Residues 92-120 (SDKTEQENEIQRLTIQITQDFQRCQKLLQ) are a coiled coil. The t-SNARE coiled-coil homology domain maps to 206 to 268 (DEQAIRHERA…KSAEKELIKA (63 aa)). Residues 280-300 (FICFLILLIVALIVILAIKLL) traverse the membrane as a helical; Anchor for type IV membrane protein segment. Arg301 is a topological domain (vesicular).

This sequence belongs to the syntaxin family.

It localises to the golgi apparatus. The protein resides in the trans-Golgi network membrane. The protein localises to the endosome membrane. In terms of biological role, t-SNARE that functions in transport from the endosome to the late Golgi and on the endocytic pathway. The protein is t-SNARE affecting a late Golgi compartment protein 2 (tlg2) of Schizosaccharomyces pombe (strain 972 / ATCC 24843) (Fission yeast).